The primary structure comprises 267 residues: MVTMKDLLECGVHFGHQTRRWNPKMKPFIFGVRKNIHIIDLQKTLRYFRYTYNIVRDAAKEGKTILFVGTKKQAKNAIEEYAKKCGMPYVNSRWLGGTLTNFNTIKKSIRKLEIIEEMEKTGQMDLLTKKEALMLRRKKEKLENFLGGIRDMKGLPDMLFIIDAVREHIAVKEGNKLGIPIVAPLDTNCDPDLIDYPIPGNDDAIRSIQLFCKEMAEAIIEGKELREQELEGEEQEEAAPATEEEKKELIEEAVAEGEAEETEEEEK.

The segment at leucine 225–lysine 267 is disordered. Residues glutamate 251–lysine 267 are compositionally biased toward acidic residues.

It belongs to the universal ribosomal protein uS2 family.

The protein is Small ribosomal subunit protein uS2 of Nitratiruptor sp. (strain SB155-2).